We begin with the raw amino-acid sequence, 450 residues long: UDP-N-acetylmuramoylalanine--D-glutamate ligase (450 aa).

Gly119–Thr125 is an ATP binding site.

It belongs to the MurCDEF family.

The protein localises to the cytoplasm. The enzyme catalyses UDP-N-acetyl-alpha-D-muramoyl-L-alanine + D-glutamate + ATP = UDP-N-acetyl-alpha-D-muramoyl-L-alanyl-D-glutamate + ADP + phosphate + H(+). The protein operates within cell wall biogenesis; peptidoglycan biosynthesis. Functionally, cell wall formation. Catalyzes the addition of glutamate to the nucleotide precursor UDP-N-acetylmuramoyl-L-alanine (UMA). The polypeptide is UDP-N-acetylmuramoylalanine--D-glutamate ligase (Lactococcus lactis subsp. lactis (strain IL1403) (Streptococcus lactis)).